A 125-amino-acid chain; its full sequence is Large ribosomal subunit protein uL18 (125 aa).

The protein belongs to the universal ribosomal protein uL18 family. In terms of assembly, part of the 50S ribosomal subunit; part of the 5S rRNA/L5/L18/L25 subcomplex. Contacts the 5S and 23S rRNAs.

This is one of the proteins that bind and probably mediate the attachment of the 5S RNA into the large ribosomal subunit, where it forms part of the central protuberance. This Anaplasma marginale (strain Florida) protein is Large ribosomal subunit protein uL18.